The primary structure comprises 60 residues: Ixodegrin-like peptide (60 aa).

Positions 1–19 (MNAVFIAALLILGTSTFDA) are cleaved as a signal peptide. The Cell attachment site signature appears at 49–51 (RGD).

It belongs to the ixodegrin family. Contains 3 disulfide bonds. In terms of tissue distribution, expressed in salivary glands.

The protein localises to the secreted. Its function is as follows. Tick salivary platelet aggregation inhibitor that plays an important part in the anti-hemostatic strategy of ticks. Inhibits platelet aggregation induced by ADP, thrombin and thromboxane A2 (TXA2). Blocks platelet adhesion to soluble collagen (most probably through the binding to alpha-2/beta-1 integrin (ITGA2/ITGB1)) and binds to purified glycoprotein IIb/IIIa (ITGA2B/ITGB3) in a dose-dependent manner. In vivo, reduces thrombus weight effectively in a rat arteriovenous shunt model and inhibits thrombosis in a carrageenan-induced mouse tail thrombosis model. The protein is Ixodegrin-like peptide of Ixodes scapularis (Black-legged tick).